Reading from the N-terminus, the 346-residue chain is L-threonine dehydratase catabolic TdcB (346 aa).

An AMP-binding site is contributed by 59–60; the sequence is FT. Residue K64 is modified to N6-(pyridoxal phosphate)lysine. Residues Q94, 125 to 126, and N321 contribute to the AMP site; that span reads GY.

This sequence belongs to the serine/threonine dehydratase family. As to quaternary structure, in the native structure, TdcB is in a dimeric form, whereas in the TdcB-AMP complex, it exists in a tetrameric form (dimer of dimers). Pyridoxal 5'-phosphate serves as cofactor.

It catalyses the reaction L-threonine = 2-oxobutanoate + NH4(+). The protein operates within amino-acid degradation; L-threonine degradation via propanoate pathway; propanoate from L-threonine: step 1/4. Its activity is regulated as follows. Each protein molecule can bind up to four molecules of AMP, which act as an allosteric activator to the enzyme. Functionally, catalyzes the anaerobic formation of alpha-ketobutyrate and ammonia from threonine in a two-step reaction. The first step involved a dehydration of threonine and a production of enamine intermediates (aminocrotonate), which tautomerizes to its imine form (iminobutyrate). Both intermediates are unstable and short-lived. The second step is the nonenzymatic hydrolysis of the enamine/imine intermediates to form 2-ketobutyrate and free ammonia. In the low water environment of the cell, the second step is accelerated by RidA. This is L-threonine dehydratase catabolic TdcB (tdcB) from Staphylococcus aureus (strain Mu50 / ATCC 700699).